A 259-amino-acid chain; its full sequence is Haloacid dehalogenase-like hydrolase domain-containing protein 2 (259 aa).

Mg(2+) contacts are provided by Asp-13 and Ser-15. Substrate contacts are provided by residues 13–15 (DLS) and 46–47 (TN). The stretch at 49–71 (TKESKRDLLERLRKLEFDISEEE) forms a coiled coil. An N6-succinyllysine modification is found at Lys-50. Lys-179 lines the substrate pocket. Asp-204 provides a ligand contact to Mg(2+).

It belongs to the HAD-like hydrolase superfamily. It depends on Mg(2+) as a cofactor.

The protein is Haloacid dehalogenase-like hydrolase domain-containing protein 2 (Hdhd2) of Rattus norvegicus (Rat).